The primary structure comprises 629 residues: tRNA uridine 5-carboxymethylaminomethyl modification enzyme MnmG (629 aa).

13 to 18 (GGGHAG) lines the FAD pocket. 273–287 (GPRYCPSIEDKIMRF) is a binding site for NAD(+).

This sequence belongs to the MnmG family. Homodimer. Heterotetramer of two MnmE and two MnmG subunits. FAD serves as cofactor.

The protein resides in the cytoplasm. Functionally, NAD-binding protein involved in the addition of a carboxymethylaminomethyl (cmnm) group at the wobble position (U34) of certain tRNAs, forming tRNA-cmnm(5)s(2)U34. The polypeptide is tRNA uridine 5-carboxymethylaminomethyl modification enzyme MnmG (Tolumonas auensis (strain DSM 9187 / NBRC 110442 / TA 4)).